Consider the following 119-residue polypeptide: uncharacterized protein (119 aa).

Residues 86–119 form a disordered region; it reads KKQRMKMLTEQEEEEEEEEEEPPKPKKKVINRKK. A compositionally biased stretch (acidic residues) spans 95–106; sequence EQEEEEEEEEEE. The segment covering 110–119 has biased composition (basic residues); sequence PKKKVINRKK.

This is an uncharacterized protein from Sputnik virophage.